The following is a 169-amino-acid chain: Anaerobic nitrite reductase NSHB2 (169 aa).

Positions 16 to 166 (SFSEEQEALV…LVAAIKQEMK (151 aa)) constitute a Globin domain. The Homodimerization signature appears at 49 to 53 (EVAPS). Positions 59, 73, 77, 107, 111, and 112 each coordinate heme b. The Homodimerization motif lies at 119–131 (DAHFEVTRFALLE).

This sequence belongs to the plant globin family. Homodimer. It depends on heme b as a cofactor. As to expression, expressed in leaves, but not in roots. Present in embryonic organs including embryos, coleoptiles and seminal roots.

It localises to the cytoplasm. The protein resides in the nucleus. It carries out the reaction Fe(III)-heme b-[protein] + nitric oxide + H2O = Fe(II)-heme b-[protein] + nitrite + 2 H(+). Phytoglobin that reduces nitrite to nitric oxide under anoxic conditions (e.g. during flooding or in waterlogged soil). May not function as an oxygen storage or transport protein. Has an unusually high affinity for O(2) through an hexacoordinate heme iron because of a very low dissociation constant. Promotes tolerance to low potassium K(+) conditions. This chain is Anaerobic nitrite reductase NSHB2, found in Oryza sativa subsp. japonica (Rice).